A 613-amino-acid polypeptide reads, in one-letter code: MPNQFETQFDIDAFLKHLTERPGVYLMYDASGQIIYVGKAKNLKRRVSSYFKKRHEEIKTETLVSQVASIEVTVTDTESEALILENTLIKRHKPRYNILFRDDKSYPYIFVSTGKKFPSLSYHRGAKRKVGRYFGPFPNASAVHQTLHALQKIFPVRQCTESVFNHRSRPCLQYQIKRCSGPCVEGLVTEAEYNEDVQHTIAFLEGKSFDVIESLGHKMQQASDEFEFEKAALYRDKISALRAIQSQHLINQPGSKDTDVVALAEEANQVCVSIMMYRGGNLWGSQNYFPKIGGQSINPGEIISAFITQHYIDLPIPQMILVSDVLEDKSSLETWLSEQKKAKVSIRKAVSQTHKGLMKLALTNAQSGLKQQLTQKASQAERVKSLQDVLALASPPNHMECFDISHTQGNQTVASCVVFNEGVPNTSAYRKFNIEGIQPGDDYAAMHQAITRRYSRVKKEGLPLPDLIVIDGGKGQLNKAIDVFKTLELDNLPLVSVAKGEGRKAGLEILYTPFNEEGIDLEADDIALHLLNYIRDEAHRFAITSHRSRRQKAQTHSRLEDIPGVGAKTRHKLLTHFGGLTEVKNAAVSELQKVPGISARIAQTIYDFFHGEI.

Positions 20 to 98 (ERPGVYLMYD…IKRHKPRYNI (79 aa)) constitute a GIY-YIG domain. One can recognise a UVR domain in the interval 209-244 (FDVIESLGHKMQQASDEFEFEKAALYRDKISALRAI).

It belongs to the UvrC family. Interacts with UvrB in an incision complex.

The protein localises to the cytoplasm. The UvrABC repair system catalyzes the recognition and processing of DNA lesions. UvrC both incises the 5' and 3' sides of the lesion. The N-terminal half is responsible for the 3' incision and the C-terminal half is responsible for the 5' incision. This chain is UvrABC system protein C, found in Hydrogenovibrio crunogenus (strain DSM 25203 / XCL-2) (Thiomicrospira crunogena).